Reading from the N-terminus, the 156-residue chain is uncharacterized protein (156 aa).

The first 22 residues, 1 to 22 (MFGKVSSLLVFASFLIIQGAFA), serve as a signal peptide directing secretion. Serine 129 carries the GPI-anchor amidated serine lipid modification. Positions 130 to 156 (GSPVRFSKSSLLIVSLLSIAAFAALVL) are cleaved as a propeptide — removed in mature form.

It is found in the cell membrane. This is an uncharacterized protein from Schizosaccharomyces pombe (strain 972 / ATCC 24843) (Fission yeast).